The sequence spans 265 residues: Transcription factor LBX1b (265 aa).

The segment at residues 121-180 (RRKSRTAFTNHQLYELEKRFLHQKYLSPADRDQIAHQLGLTNAQVITWFQNRRAKLKRDL) is a DNA-binding region (homeobox).

It is found in the nucleus. In terms of biological role, transcription factor required for the development of hypaxial muscles. The protein is Transcription factor LBX1b of Danio rerio (Zebrafish).